The following is a 344-amino-acid chain: Holliday junction branch migration complex subunit RuvB (344 aa).

The tract at residues 1-182 (MRIEALNTAP…FGINSRLDYY (182 aa)) is large ATPase domain (RuvB-L). ATP is bound by residues Ile-21, Arg-22, Gly-63, Lys-66, Thr-67, Thr-68, 129 to 131 (EDY), Arg-172, Tyr-182, and Arg-219. A Mg(2+)-binding site is contributed by Thr-67. The small ATPAse domain (RuvB-S) stretch occupies residues 183–253 (NPELLQSIII…VARRTLESLE (71 aa)). Positions 256–344 (EGGLDDMDKK…GSLFDTAEDG (89 aa)) are head domain (RuvB-H). DNA is bound by residues Arg-311 and Arg-316.

This sequence belongs to the RuvB family. Homohexamer. Forms an RuvA(8)-RuvB(12)-Holliday junction (HJ) complex. HJ DNA is sandwiched between 2 RuvA tetramers; dsDNA enters through RuvA and exits via RuvB. An RuvB hexamer assembles on each DNA strand where it exits the tetramer. Each RuvB hexamer is contacted by two RuvA subunits (via domain III) on 2 adjacent RuvB subunits; this complex drives branch migration. In the full resolvosome a probable DNA-RuvA(4)-RuvB(12)-RuvC(2) complex forms which resolves the HJ.

It localises to the cytoplasm. The catalysed reaction is ATP + H2O = ADP + phosphate + H(+). Its function is as follows. The RuvA-RuvB-RuvC complex processes Holliday junction (HJ) DNA during genetic recombination and DNA repair, while the RuvA-RuvB complex plays an important role in the rescue of blocked DNA replication forks via replication fork reversal (RFR). RuvA specifically binds to HJ cruciform DNA, conferring on it an open structure. The RuvB hexamer acts as an ATP-dependent pump, pulling dsDNA into and through the RuvAB complex. RuvB forms 2 homohexamers on either side of HJ DNA bound by 1 or 2 RuvA tetramers; 4 subunits per hexamer contact DNA at a time. Coordinated motions by a converter formed by DNA-disengaged RuvB subunits stimulates ATP hydrolysis and nucleotide exchange. Immobilization of the converter enables RuvB to convert the ATP-contained energy into a lever motion, pulling 2 nucleotides of DNA out of the RuvA tetramer per ATP hydrolyzed, thus driving DNA branch migration. The RuvB motors rotate together with the DNA substrate, which together with the progressing nucleotide cycle form the mechanistic basis for DNA recombination by continuous HJ branch migration. Branch migration allows RuvC to scan DNA until it finds its consensus sequence, where it cleaves and resolves cruciform DNA. This is Holliday junction branch migration complex subunit RuvB from Chlorobaculum tepidum (strain ATCC 49652 / DSM 12025 / NBRC 103806 / TLS) (Chlorobium tepidum).